A 243-amino-acid chain; its full sequence is MALDIYPAIDLKEGKAVRLFKGDMQSATIYGEALEFAKMFEDMGAKWLHIVDLDGAFAGIPQNLKYIEEILRTTHLQIQIGGGIRNEERIRLYMDLGVSRVILGSIAIKNWEFVKTMAHSYPIAVGIDAREGKVAVQGWAKESDICSSVLAEKFAGSEVQAIICTDINRDGALSGINVSFTQDIACRSGIYTIASGGFASSNELEILDENPYISGVIIGKAFYEGKINLKEALALFENKKVKI.

Asp10 functions as the Proton acceptor in the catalytic mechanism. The Proton donor role is filled by Asp128.

The protein belongs to the HisA/HisF family.

The protein resides in the cytoplasm. It carries out the reaction 1-(5-phospho-beta-D-ribosyl)-5-[(5-phospho-beta-D-ribosylamino)methylideneamino]imidazole-4-carboxamide = 5-[(5-phospho-1-deoxy-D-ribulos-1-ylimino)methylamino]-1-(5-phospho-beta-D-ribosyl)imidazole-4-carboxamide. It functions in the pathway amino-acid biosynthesis; L-histidine biosynthesis; L-histidine from 5-phospho-alpha-D-ribose 1-diphosphate: step 4/9. In Helicobacter hepaticus (strain ATCC 51449 / 3B1), this protein is 1-(5-phosphoribosyl)-5-[(5-phosphoribosylamino)methylideneamino] imidazole-4-carboxamide isomerase.